Consider the following 921-residue polypeptide: Isoleucine--tRNA ligase (921 aa).

Positions 57–67 match the 'HIGH' region motif; sequence PYANGELHMGH. Glu-552 lines the L-isoleucyl-5'-AMP pocket. The short motif at 593-597 is the 'KMSKS' region element; sequence KMSKS. Residue Lys-596 coordinates ATP. The Zn(2+) site is built by Cys-888, Cys-891, Cys-908, and Cys-911.

This sequence belongs to the class-I aminoacyl-tRNA synthetase family. IleS type 1 subfamily. As to quaternary structure, monomer. Zn(2+) is required as a cofactor.

It localises to the cytoplasm. The enzyme catalyses tRNA(Ile) + L-isoleucine + ATP = L-isoleucyl-tRNA(Ile) + AMP + diphosphate. Functionally, catalyzes the attachment of isoleucine to tRNA(Ile). As IleRS can inadvertently accommodate and process structurally similar amino acids such as valine, to avoid such errors it has two additional distinct tRNA(Ile)-dependent editing activities. One activity is designated as 'pretransfer' editing and involves the hydrolysis of activated Val-AMP. The other activity is designated 'posttransfer' editing and involves deacylation of mischarged Val-tRNA(Ile). The sequence is that of Isoleucine--tRNA ligase from Listeria monocytogenes serovar 1/2a (strain ATCC BAA-679 / EGD-e).